The following is a 66-amino-acid chain: Potassium channel toxin alpha-KTx 30.3 (66 aa).

The first 24 residues, 1–24, serve as a signal peptide directing secretion; it reads MNKTFFLVVIMATVLVLAFDATDA. 3 disulfides stabilise this stretch: Cys-30–Cys-50, Cys-36–Cys-55, and Cys-40–Cys-57.

Belongs to the short scorpion toxin superfamily. Potassium channel inhibitor family. Alpha-KTx 30 subfamily. Expressed by the venom gland.

It is found in the secreted. Functionally, inhibits Kv1.3/KCNA3 channel. The polypeptide is Potassium channel toxin alpha-KTx 30.3 (Scorpiops jendeki (Scorpion)).